A 20-amino-acid polypeptide reads, in one-letter code: TDSIKETIKETVNHQAEWPY.

Residues 1 to 12 (TDSIKETIKETV) are compositionally biased toward basic and acidic residues. Positions 1-20 (TDSIKETIKETVNHQAEWPY) are disordered.

This Streptococcus thermophilus protein is 21 kDa cold shock-induced protein.